A 958-amino-acid chain; its full sequence is Glycine dehydrogenase (decarboxylating) (958 aa).

The residue at position 703 (Lys-703) is an N6-(pyridoxal phosphate)lysine.

This sequence belongs to the GcvP family. In terms of assembly, the glycine cleavage system is composed of four proteins: P, T, L and H. Requires pyridoxal 5'-phosphate as cofactor.

It carries out the reaction N(6)-[(R)-lipoyl]-L-lysyl-[glycine-cleavage complex H protein] + glycine + H(+) = N(6)-[(R)-S(8)-aminomethyldihydrolipoyl]-L-lysyl-[glycine-cleavage complex H protein] + CO2. The glycine cleavage system catalyzes the degradation of glycine. The P protein binds the alpha-amino group of glycine through its pyridoxal phosphate cofactor; CO(2) is released and the remaining methylamine moiety is then transferred to the lipoamide cofactor of the H protein. The protein is Glycine dehydrogenase (decarboxylating) of Nitrobacter hamburgensis (strain DSM 10229 / NCIMB 13809 / X14).